Reading from the N-terminus, the 260-residue chain is Uroplakin-1b (260 aa).

At 1–15 the chain is on the cytoplasmic side; sequence MAKDDSTVRCFQGLL. A helical transmembrane segment spans residues 16-36; it reads IFGHVIVGMCGIALTAECIFF. The Extracellular portion of the chain corresponds to 37-59; sequence VSDQHSLYPLLEATNNDDIFGAA. The chain crosses the membrane as a helical span at residues 60–80; it reads WIGMFVGICLFCLSVLAIVGI. Residues 81–86 lie on the Cytoplasmic side of the membrane; sequence MKSNRK. Residues 87–107 form a helical membrane-spanning segment; the sequence is ILLAYFIMMFIVYGFEVASCI. Residues 108-229 are Extracellular-facing; that stretch reads TAATQRDFFT…ELISGPMDRH (122 aa). Residues 230 to 250 traverse the membrane as a helical segment; that stretch reads AWGVAWFGFAILCWTFWVLLG. At 251–260 the chain is on the cytoplasmic side; the sequence is TMFYWSRIEY.

This sequence belongs to the tetraspanin (TM4SF) family. As to quaternary structure, heterodimer with uroplakin-3A (UPK3A) or uroplakin-3B (UPK3B). N-glycosylated with high-mannose oligosaccharides.

It is found in the membrane. Its function is as follows. Component of the asymmetric unit membrane (AUM); a highly specialized biomembrane elaborated by terminally differentiated urothelial cells. May play an important role in normal bladder epithelial physiology, possibly in regulating membrane permeability of superficial umbrella cells or in stabilizing the apical membrane through AUM/cytoskeletal interactions. This is Uroplakin-1b (Upk1b) from Rattus norvegicus (Rat).